Consider the following 335-residue polypeptide: MAQEAPRWLEPSPFEWKDQTGLAVKTAIPGAKPTVAIDVASVTKSYGDKPVINGLSFTVAAGECFGLLGPNGAGKSTITRMILGMTTPGTGEITVLGVPVPSRARLARMRIGVVPQFDNLDLEFTVRENLLVFGRYFRMSTREIEAVIPSLLEFARLENKADARVSDLSGGMKRRLTLARALINDPQLLILDEPTTGLDPHARHLIWERLRSLLARGKTILLTTHIMEEAERLCDRLCVLEAGHKIAEGRPHMLIDEKIGCQVIEIYGGDPHELSALVSPHARHIEVSGETVFCYASDPEQVRVQLDGRAGVRFLQRPPNLEDVFLRLTGRELKD.

Positions 37–267 constitute an ABC transporter domain; the sequence is IDVASVTKSY…KIGCQVIEIY (231 aa). ATP is bound at residue 69 to 76; that stretch reads GPNGAGKS.

Belongs to the ABC transporter superfamily. Lipooligosaccharide exporter (TC 3.A.1.102) family. As to quaternary structure, the complex is composed of two ATP-binding proteins (NodI) and two transmembrane proteins (NodJ).

The protein localises to the cell inner membrane. In terms of biological role, part of the ABC transporter complex NodIJ involved in the export of the nodulation factors (Nod factors), the bacterial signal molecules that induce symbiosis and subsequent nodulation induction. Nod factors are LCO (lipo-chitin oligosaccharide), a modified beta-1,4-linked N-acetylglucosamine oligosaccharide. This subunit is responsible for energy coupling to the transport system. The sequence is that of Nod factor export ATP-binding protein I from Rhizobium meliloti (strain 1021) (Ensifer meliloti).